Reading from the N-terminus, the 196-residue chain is UPF0215 protein MM_1007 (196 aa).

Belongs to the UPF0215 family.

The sequence is that of UPF0215 protein MM_1007 from Methanosarcina mazei (strain ATCC BAA-159 / DSM 3647 / Goe1 / Go1 / JCM 11833 / OCM 88) (Methanosarcina frisia).